Consider the following 257-residue polypeptide: MKKTAFILLLFIALTLTTSPLVNGSEKSEEINEKDLRKKSELQRNALSNLRQIYYYNEKAITENKESDDQFLENTLLFKGFFTGHPWYNDLLVDLGSKDATNKYKGKKVDLYGAYYGYQCAGGTPNKTACMYGGVTLHDNNRLTEEKKVPINLWIDGKQTTVPIDKVKTSKKEVTVQELDLQARHYLHGKFGLYNSDSFGGKVQRGLIVFHSSEGSTVSYDLFDAQGQYPDTLLRIYRDNKTINSENLHIDLYLYTT.

An N-terminal signal peptide occupies residues 1–27 (MKKTAFILLLFIALTLTTSPLVNGSEK). Cysteine 120 and cysteine 130 are joined by a disulfide. Zn(2+)-binding residues include histidine 211, histidine 249, and aspartate 251.

The protein belongs to the staphylococcal/streptococcal toxin family. As to quaternary structure, interacts with host MHC class II molecules composed of alpha/HLA-DRA and beta/HLA-DRB1 chains. Interacts with host T-cell receptor beta variable TRBV7-9. Zn(2+) serves as cofactor.

It is found in the secreted. Functionally, staphylococcal enterotoxin that activates the host immune system by binding as unprocessed molecules to major histocompatibility (MHC) complex class II and T-cell receptor (TCR) molecules. In turn, this ternary complex activates a large number of T-lymphocytes initiating a systemic release of pro-inflammatory cytokines. Also causes the intoxication staphylococcal food poisoning syndrome. The protein is Enterotoxin type E (entE) of Staphylococcus aureus.